Consider the following 200-residue polypeptide: NADH-quinone oxidoreductase subunit B (200 aa).

Residues Cys-79, Cys-80, Cys-144, and Cys-174 each contribute to the [4Fe-4S] cluster site.

This sequence belongs to the complex I 20 kDa subunit family. In terms of assembly, NDH-1 is composed of 14 different subunits. Subunits NuoB, C, D, E, F, and G constitute the peripheral sector of the complex. [4Fe-4S] cluster serves as cofactor.

Its subcellular location is the cell inner membrane. The enzyme catalyses a quinone + NADH + 5 H(+)(in) = a quinol + NAD(+) + 4 H(+)(out). NDH-1 shuttles electrons from NADH, via FMN and iron-sulfur (Fe-S) centers, to quinones in the respiratory chain. The immediate electron acceptor for the enzyme in this species is believed to be ubiquinone. Couples the redox reaction to proton translocation (for every two electrons transferred, four hydrogen ions are translocated across the cytoplasmic membrane), and thus conserves the redox energy in a proton gradient. This is NADH-quinone oxidoreductase subunit B from Caulobacter vibrioides (strain NA1000 / CB15N) (Caulobacter crescentus).